Here is a 150-residue protein sequence, read N- to C-terminus: Large ribosomal subunit protein uL22c (150 aa).

It belongs to the universal ribosomal protein uL22 family. As to quaternary structure, part of the 50S ribosomal subunit.

It is found in the plastid. Its subcellular location is the chloroplast. Its function is as follows. This protein binds specifically to 23S rRNA. In terms of biological role, the globular domain of the protein is located near the polypeptide exit tunnel on the outside of the subunit, while an extended beta-hairpin is found that lines the wall of the exit tunnel in the center of the 70S ribosome. The sequence is that of Large ribosomal subunit protein uL22c (rpl22) from Fagopyrum esculentum subsp. ancestrale (Wild buckwheat).